A 376-amino-acid polypeptide reads, in one-letter code: Alcohol dehydrogenase class-3 (376 aa).

Cysteine 40, histidine 62, cysteine 92, cysteine 95, cysteine 98, cysteine 106, and cysteine 170 together coordinate Zn(2+).

It belongs to the zinc-containing alcohol dehydrogenase family. Class-III subfamily. In terms of assembly, homodimer. It depends on Zn(2+) as a cofactor.

The protein localises to the cytoplasm. It catalyses the reaction a primary alcohol + NAD(+) = an aldehyde + NADH + H(+). The enzyme catalyses a secondary alcohol + NAD(+) = a ketone + NADH + H(+). It carries out the reaction S-(hydroxymethyl)glutathione + NADP(+) = S-formylglutathione + NADPH + H(+). The catalysed reaction is S-(hydroxymethyl)glutathione + NAD(+) = S-formylglutathione + NADH + H(+). Functionally, oxidizes long-chain aliphatic alcohols, long-chain hydroxylated fatty acids and S-hydroxymethylglutathione (hmGSH) in increasing order of preference. Shows little or no activity with short-chain aliphatic alcohols. This Cereibacter sphaeroides (strain ATCC 17023 / DSM 158 / JCM 6121 / CCUG 31486 / LMG 2827 / NBRC 12203 / NCIMB 8253 / ATH 2.4.1.) (Rhodobacter sphaeroides) protein is Alcohol dehydrogenase class-3 (adhI).